We begin with the raw amino-acid sequence, 406 residues long: ATP phosphoribosyltransferase regulatory subunit (406 aa).

Belongs to the class-II aminoacyl-tRNA synthetase family. HisZ subfamily. As to quaternary structure, heteromultimer composed of HisG and HisZ subunits.

The protein resides in the cytoplasm. It functions in the pathway amino-acid biosynthesis; L-histidine biosynthesis; L-histidine from 5-phospho-alpha-D-ribose 1-diphosphate: step 1/9. Its function is as follows. Required for the first step of histidine biosynthesis. May allow the feedback regulation of ATP phosphoribosyltransferase activity by histidine. In Methylococcus capsulatus (strain ATCC 33009 / NCIMB 11132 / Bath), this protein is ATP phosphoribosyltransferase regulatory subunit.